A 188-amino-acid polypeptide reads, in one-letter code: NAD(P)H-quinone oxidoreductase subunit J (188 aa).

Belongs to the complex I 30 kDa subunit family. In terms of assembly, NDH-1 can be composed of about 15 different subunits; different subcomplexes with different compositions have been identified which probably have different functions.

The protein resides in the cellular thylakoid membrane. The catalysed reaction is a plastoquinone + NADH + (n+1) H(+)(in) = a plastoquinol + NAD(+) + n H(+)(out). The enzyme catalyses a plastoquinone + NADPH + (n+1) H(+)(in) = a plastoquinol + NADP(+) + n H(+)(out). NDH-1 shuttles electrons from an unknown electron donor, via FMN and iron-sulfur (Fe-S) centers, to quinones in the respiratory and/or the photosynthetic chain. The immediate electron acceptor for the enzyme in this species is believed to be plastoquinone. Couples the redox reaction to proton translocation, and thus conserves the redox energy in a proton gradient. Cyanobacterial NDH-1 also plays a role in inorganic carbon-concentration. The polypeptide is NAD(P)H-quinone oxidoreductase subunit J (Parasynechococcus marenigrum (strain WH8102)).